A 327-amino-acid chain; its full sequence is Phenylalanine--tRNA ligase alpha subunit (327 aa).

Glu252 serves as a coordination point for Mg(2+).

Belongs to the class-II aminoacyl-tRNA synthetase family. Phe-tRNA synthetase alpha subunit type 1 subfamily. Tetramer of two alpha and two beta subunits. Mg(2+) is required as a cofactor.

The protein localises to the cytoplasm. The enzyme catalyses tRNA(Phe) + L-phenylalanine + ATP = L-phenylalanyl-tRNA(Phe) + AMP + diphosphate + H(+). The chain is Phenylalanine--tRNA ligase alpha subunit from Shewanella sediminis (strain HAW-EB3).